The primary structure comprises 1378 residues: S-cell enriched with leucine-rich repeat-containing protein slrA (1378 aa).

The helical transmembrane segment at 17 to 37 (IFKILYCYLFTSLLLILSTWV) threads the bilayer. N-linked (GlcNAc...) asparagine glycans are attached at residues asparagine 59, asparagine 112, asparagine 143, asparagine 172, and asparagine 201. LRR repeat units follow at residues 143-165 (NLTG…LPYL), 167-188 (HLRN…GLLK), 191-212 (SLVA…ADSK), 213-235 (AISY…WKTP), 236-257 (NLLF…EFFR), 260-281 (SLDY…LSKS), 282-304 (RISY…TCWK), 307-329 (SLRI…IFDH), and 331-353 (PLQY…LDCA). 3 N-linked (GlcNAc...) asparagine glycosylation sites follow: asparagine 265, asparagine 287, and asparagine 296. N-linked (GlcNAc...) asparagine glycans are attached at residues asparagine 416, asparagine 436, asparagine 451, asparagine 491, asparagine 513, asparagine 596, asparagine 605, asparagine 634, asparagine 704, asparagine 710, asparagine 740, asparagine 741, asparagine 771, asparagine 788, asparagine 801, asparagine 826, asparagine 843, asparagine 861, asparagine 875, and asparagine 907. A coiled-coil region spans residues 886–946 (SLNNNNNNNN…NNNENNNENK (61 aa)). The span at 891-909 (NNNNNNNNNKNNNNNNNDS) shows a compositional bias: low complexity. Residues 891–945 (NNNNNNNNNKNNNNNNNDSNNEKEVVEDEEEDLDYSSQNDNNNINNNNNENNNEN) are disordered. Residues 915–924 (VVEDEEEDLD) show a composition bias toward acidic residues. Residues 929-945 (NDNNNINNNNNENNNEN) show a composition bias toward low complexity. Asparagine 953, asparagine 970, asparagine 1090, and asparagine 1100 each carry an N-linked (GlcNAc...) asparagine glycan. The chain crosses the membrane as a helical span at residues 1160 to 1180 (YYIVFFGCASGLILVLVICIV). Residues 1227–1276 (DLNNNNNNNNNNNNNNNNNNNNNNNNNNNNNNNNNFNDGSDTFNNNNKKN) show a composition bias toward low complexity. The segment at 1227–1378 (DLNNNNNNNN…KKHLTIINKK (152 aa)) is disordered. Positions 1289-1304 (DGKENDIKNINNKKDE) are enriched in basic and acidic residues. The segment covering 1305 to 1324 (KEDDGDDDDDEDDDEYEDDT) has biased composition (acidic residues). Positions 1328-1353 (SSGNSSRSKGSDGGSSSNSLSSDKQS) are enriched in low complexity. Asparagine 1331 and asparagine 1360 each carry an N-linked (GlcNAc...) asparagine glycan. A compositionally biased stretch (polar residues) spans 1354–1364 (FNNGNENNSII). Over residues 1368 to 1378 (KKKHLTIINKK) the composition is skewed to basic residues.

It is found in the membrane. In Dictyostelium discoideum (Social amoeba), this protein is S-cell enriched with leucine-rich repeat-containing protein slrA (slrA).